The primary structure comprises 237 residues: Sugar fermentation stimulation protein homolog (237 aa).

This sequence belongs to the SfsA family.

This is Sugar fermentation stimulation protein homolog from Pseudomonas syringae pv. syringae (strain B728a).